The primary structure comprises 394 residues: L-lactate dehydrogenase (394 aa).

The region spanning 1–380 (MIISAASDYR…SRDSLVQNAE (380 aa)) is the FMN hydroxy acid dehydrogenase domain. Tyr24 is a binding site for substrate. Residues Ser106 and Gln127 each contribute to the FMN site. Residue Tyr129 participates in substrate binding. Thr155 contributes to the FMN binding site. Arg164 is a binding site for substrate. Lys251 lines the FMN pocket. His275 (proton acceptor) is an active-site residue. Arg278 is a binding site for substrate. An FMN-binding site is contributed by 306–330 (DSGIRNGLDVVRMIALGADSVLLGR).

This sequence belongs to the FMN-dependent alpha-hydroxy acid dehydrogenase family. FMN serves as cofactor.

Its subcellular location is the cell inner membrane. The enzyme catalyses (S)-lactate + A = pyruvate + AH2. Its function is as follows. Catalyzes the conversion of L-lactate to pyruvate. Is coupled to the respiratory chain. The chain is L-lactate dehydrogenase from Klebsiella pneumoniae subsp. pneumoniae (strain ATCC 700721 / MGH 78578).